Here is a 236-residue protein sequence, read N- to C-terminus: Small ribosomal subunit protein uS3 (236 aa).

Residues 38–106 (LRRYLHTRLK…DIQINISEIK (69 aa)) form the KH type-2 domain. A disordered region spans residues 211–236 (DLSPNVQAQQRKMKESPQQRRQRRGG).

It belongs to the universal ribosomal protein uS3 family. In terms of assembly, part of the 30S ribosomal subunit. Forms a tight complex with proteins S10 and S14.

In terms of biological role, binds the lower part of the 30S subunit head. Binds mRNA in the 70S ribosome, positioning it for translation. The sequence is that of Small ribosomal subunit protein uS3 from Salinibacter ruber (strain DSM 13855 / M31).